A 333-amino-acid chain; its full sequence is MRIAVDAMGGDYAPLEITKGVYKALENFNIEIVLVGNKDQLDKYVKEEKGLTVVHTTETITNNEPPVAAIRKKKDSSMAVGIDMLKKGEVDAFLSAGNTGALMAGSLLKIGRIKGIDRPALAPILPTLNGATILLDAGSNTDCKPINLFQFAIMGNVYAQKMLNIDNPKIGLFNIGAEEEKGNELTKQVYDLIKNSHLNFIGNVEGRDIAYGVADVVTCDGFVGNAILKSMEGTASVISSLLKQELQRNLLTKLGAILIYNGLKNIVKKMDYTEYGGAPLLGIKKPVIKAHGSSKSKAIFNAIRQAKTIVEMDVISHIQREIELIGDDISAAK.

It belongs to the PlsX family. Homodimer. Probably interacts with PlsY.

It localises to the cytoplasm. It carries out the reaction a fatty acyl-[ACP] + phosphate = an acyl phosphate + holo-[ACP]. Its pathway is lipid metabolism; phospholipid metabolism. Its function is as follows. Catalyzes the reversible formation of acyl-phosphate (acyl-PO(4)) from acyl-[acyl-carrier-protein] (acyl-ACP). This enzyme utilizes acyl-ACP as fatty acyl donor, but not acyl-CoA. This chain is Phosphate acyltransferase, found in Thermoanaerobacterium thermosaccharolyticum (strain ATCC 7956 / DSM 571 / NCIMB 9385 / NCA 3814 / NCTC 13789 / WDCM 00135 / 2032) (Clostridium thermosaccharolyticum).